Here is a 620-residue protein sequence, read N- to C-terminus: Membrane protein insertase YidC (620 aa).

6 consecutive transmembrane segments (helical) span residues 5–25, 343–363, 366–386, 436–456, 482–502, and 529–549; these read QIIGISLISVLMLGYFGFMST, LGWPLVSWINRFVVIPVFDGL, VFSSFGLIIVILVLLIKLVLL, LSGCIPVLLQMPILLAMFNFF, LPFTIPFYGSHVSMFTLLMTI, and PVVFLFVLNSFPAGLSFYYFV.

It belongs to the OXA1/ALB3/YidC family. Type 1 subfamily. As to quaternary structure, interacts with the Sec translocase complex via SecD. Specifically interacts with transmembrane segments of nascent integral membrane proteins during membrane integration.

The protein localises to the cell inner membrane. Functionally, required for the insertion and/or proper folding and/or complex formation of integral membrane proteins into the membrane. Involved in integration of membrane proteins that insert both dependently and independently of the Sec translocase complex, as well as at least some lipoproteins. Aids folding of multispanning membrane proteins. The sequence is that of Membrane protein insertase YidC from Cytophaga hutchinsonii (strain ATCC 33406 / DSM 1761 / CIP 103989 / NBRC 15051 / NCIMB 9469 / D465).